The sequence spans 662 residues: Probable protein phosphatase 2C 4 (662 aa).

Ser153 is subject to Phosphoserine. Positions 249–653 (DVSLENQNLQ…DDVSIVVISL (405 aa)) constitute a PPM-type phosphatase domain. Positions 286, 287, 581, and 644 each coordinate Mn(2+).

Belongs to the PP2C family. Mg(2+) is required as a cofactor. The cofactor is Mn(2+). In terms of tissue distribution, expressed in seedlings, roots, leaves, stems, young inflorescences, flowers and siliques.

The protein resides in the nucleus. It carries out the reaction O-phospho-L-seryl-[protein] + H2O = L-seryl-[protein] + phosphate. The enzyme catalyses O-phospho-L-threonyl-[protein] + H2O = L-threonyl-[protein] + phosphate. Functionally, involved in leaf development regulation. This is Probable protein phosphatase 2C 4 (PLL5) from Arabidopsis thaliana (Mouse-ear cress).